The chain runs to 551 residues: MPSARLQQQFIRLWQCCEGKSQETTLNELAALLSCSRRHMRTLLNTMQDRGWLTWEAEVGRGKRSRLTFLYTGLALQQQRAEDLLEQDRIDQLVQLVGDKATVRQMLVSHLGRSFRQGRHILRVLYYRPLRNLLPGSALRRSETHIARQIFSSLTRINEENGELEADIAHHWQQISPLHWRFFLRPGVHFHHGRELEMDDVIFSLKRINTLPLYSHIADIVSPTPWTLDIHLTQPDRWLPLLLGQVPAMILPREWETLSNFASHPIGTGPYAVIRNSTNQLKIQAFDDFFGYRALIDEVNVWVLPEIADEPAGGLMLKGPQGEEKEIESRLEEGCYYLLFDSRTHRGANQQVRDWVSYVLSPTNLVYFAEEQYQQLWFPAYGLLPRWHHARIIKSEKPAGLESLTLTFYQDHSEHRVIAGIMQQILASHQVTLEIKEISYDQWHEGEIESDIWLNSANFTLPLDFSLFAHLCEVPLLQHCIPIDWQADAARWRNGEMNLANWCQQLVASKAMVPLIHHWLIIQGQRSMRGLRMNTLGWFDFKSAWFAPPDP.

The 116-residue stretch at 1 to 116 (MPSARLQQQF…LVSHLGRSFR (116 aa)) folds into the HTH marR-type domain. Positions 26–49 (LNELAALLSCSRRHMRTLLNTMQD) form a DNA-binding region, H-T-H motif. Residues 163–492 (ELEADIAHHW…IDWQADAARW (330 aa)) are solute-binding.

Its function is as follows. Activates the small RNA gene sgrS under glucose-phosphate stress conditions as well as yfdZ. Represses its own transcription under both stress and non-stress conditions. Might act as a sensor of the intracellular accumulation of phosphoglucose by binding these molecules in its C-terminal solute-binding domain. This is HTH-type transcriptional regulator SgrR from Escherichia coli O6:K15:H31 (strain 536 / UPEC).